The primary structure comprises 160 residues: Serine-protein kinase RsbW (160 aa).

Belongs to the anti-sigma-factor family.

The enzyme catalyses L-seryl-[protein] + ATP = O-phospho-L-seryl-[protein] + ADP + H(+). It catalyses the reaction L-threonyl-[protein] + ATP = O-phospho-L-threonyl-[protein] + ADP + H(+). Its function is as follows. Negative regulator of sigma-B activity. Phosphorylates and inactivates its specific antagonist protein, RsbV. Upon phosphorylation of RsbV, RsbW is released and binds to sigma-B, thereby blocking its ability to form an RNA polymerase holoenzyme (E-sigma-B). The polypeptide is Serine-protein kinase RsbW (Bacillus thuringiensis (strain Al Hakam)).